Reading from the N-terminus, the 522-residue chain is MELRADLRSILQYLPLVAQSSSLVWPPSVEEELQTISRGPSESMVNSGEALALHITNMRKSLSLNASDLAPYALQGYGLFFDKKISREESANFFGEVVPALCRLLLQLPSMLEKHYQKADHVLDGVKSGLRLLGPQEAGIVLLSQELIAALLACSFFCLFPEVDRSLKNLQGINFSGLFSFPYMRHCTKQENKIKCLIHYFGRICRWMPTGFVSFERKILPLEYHPHFVSYPKADSWANSVTPLCSIEIHTSGAIEDQPCEALEVDFADEYFGGLTLSYDTLQEEIRFVINPELIAGMIFLPRMDANEAIEIVGVERFSGYTGYGPSFQYAGDYTDNKDLDIFRRRKTRVIAIDAMPDPGMGQYKLDALIREVNKAFSGYMHQCKYNIDVKHDPEASSSHVPLTSDSASQVIESSHRWCIDHEEKKIGVATGNWGCGVFGGDPELKIMLQWLAISQSGRPFMSYYTFGLQALQNLNQVIEMVALQEMTVGDLWKKLVEYSSERLSRRTWLGFFSWLMTSLST.

This sequence belongs to the poly(ADP-ribose) glycohydrolase family.

The enzyme catalyses [(1''-&gt;2')-ADP-alpha-D-ribose](n) + H2O = [(1''-&gt;2')-ADP-alpha-D-ribose](n-1) + ADP-D-ribose. Its function is as follows. Poly(ADP-ribose) synthesized after DNA damage is only present transiently and is rapidly degraded by poly(ADP-ribose) glycohydrolase. This is Probable poly(ADP-ribose) glycohydrolase 2 (PARG2) from Arabidopsis thaliana (Mouse-ear cress).